A 343-amino-acid polypeptide reads, in one-letter code: Ribosomal RNA small subunit methyltransferase C (343 aa).

This sequence belongs to the methyltransferase superfamily. RsmC family. In terms of assembly, monomer.

Its subcellular location is the cytoplasm. The catalysed reaction is guanosine(1207) in 16S rRNA + S-adenosyl-L-methionine = N(2)-methylguanosine(1207) in 16S rRNA + S-adenosyl-L-homocysteine + H(+). Functionally, specifically methylates the guanine in position 1207 of 16S rRNA in the 30S particle. This chain is Ribosomal RNA small subunit methyltransferase C, found in Shigella boydii serotype 4 (strain Sb227).